We begin with the raw amino-acid sequence, 1400 residues long: Bromodomain-containing protein 4 (1400 aa).

The disordered stretch occupies residues 1-58; sequence MSTESGPGTRLRNLPVMGDGLETSQMSTTQAQAQPQPANAASTNPPPPETSNPNKPKR. Over residues 23–43 the composition is skewed to low complexity; it reads TSQMSTTQAQAQPQPANAAST. Residues 58 to 164 form the Bromo 1 domain; sequence RQTNQLQYLL…KLFLQKINEL (107 aa). Residue K99 forms a Glycyl lysine isopeptide (Lys-Gly) (interchain with G-Cter in SUMO2) linkage. Disordered stretches follow at residues 176 to 353 and 461 to 616; these read AKGR…KISE and EPEE…YEEK. Residues 197–212 are compositionally biased toward low complexity; it reads PNTTQASTSPQTQTPQ. The segment covering 244 to 267 has biased composition (pro residues); it reads PPQPLQTPSPVPPQPPPPPAPVPQ. A compositionally biased stretch (basic and acidic residues) spans 321-337; that stretch reads PRRESSRPVKPPKKDVP. Positions 349–458 constitute a Bromo 2 domain; the sequence is SKISEQLKCC…DVFEMRFAKM (110 aa). S471 is subject to Phosphoserine. Positions 479–498 are enriched in low complexity; that stretch reads KVVAPPSSSDSSSDSSSDSD. S485, S489, and S493 each carry phosphoserine; by CK2. Positions 485–504 are NPS region; that stretch reads SSSDSSSDSSSDSDSSTDDS. S495 is subject to Phosphoserine. S499, S500, and S504 each carry phosphoserine; by CK2. The segment at 525-580 is BID region; that stretch reads QLAALSQPQQNKPKKKEKDKKEKKKEKHKKKEEVEENKKSKTKELPPKKTKKNNSS. Basic residues predominate over residues 536–554; that stretch reads KPKKKEKDKKEKKKEKHKK. A compositionally biased stretch (basic and acidic residues) spans 555-571; that stretch reads KEEVEENKKSKTKELPP. Residue K586 forms a Glycyl lysine isopeptide (Lys-Gly) (interchain with G-Cter in SUMO2) linkage. One can recognise an NET domain in the interval 601–683; that stretch reads ESEEEDKCKP…SCLRKKRKPQ (83 aa). S602 is modified (phosphoserine). The segment covering 606–616 has biased composition (basic and acidic residues); it reads DKCKPMSYEEK. Residues K646 and K695 each participate in a glycyl lysine isopeptide (Lys-Gly) (interchain with G-Cter in SUMO2) cross-link. Residues 675–1125 form a disordered region; it reads CLRKKRKPQA…GCPPASPAAV (451 aa). Over residues 700–713 the composition is skewed to low complexity; it reads SSSESESTSESSSS. Over residues 725–745 the composition is skewed to basic residues; that stretch reads KSKKKGHTGRDQKKHHHHHHP. Composition is skewed to pro residues over residues 748–787, 835–848, 883–892, and 900–909; these read QPAPAPVPQQPPPPPQQPPPPPPPQQQQQQPPPPPPPPSM, PELPPHLPQPPEHS, PPKPTRPPAV, and PLLPQPPMAQ. Residues 928–938 are compositionally biased toward low complexity; that stretch reads MQMQLYLQQLQ. 3 stretches are compositionally biased toward pro residues: residues 955-966, 975-1000, and 1013-1037; these read QPPPPLPPPPHP, PQPPPPPPPQPQPPPQQQHQPPPRPV, and QPPPPPGQQPTHPPPGQQPPPPQPA. Positions 1050-1400 are C-terminal (CTD) region; sequence RHHKSDPYSA…LLSIFEENLF (351 aa). K1053 participates in a covalent cross-link: Glycyl lysine isopeptide (Lys-Gly) (interchain with G-Cter in SUMO2). Polar residues predominate over residues 1075–1084; it reads QMPQFQSLTH. Low complexity predominate over residues 1085–1095; sequence QSPPQQNVQPK. Residue K1147 is modified to N6-acetyllysine; alternate. K1147 is covalently cross-linked (Glycyl lysine isopeptide (Lys-Gly) (interchain with G-Cter in SUMO1); alternate). Residue K1147 forms a Glycyl lysine isopeptide (Lys-Gly) (interchain with G-Cter in SUMO2); alternate linkage. Residues S1153 and S1162 each carry the phosphoserine modification. Residues 1155 to 1377 form a disordered region; the sequence is IIRSEPFSTS…KREQERRRRE (223 aa). Positions 1211 to 1232 are enriched in basic and acidic residues; it reads PDKDKQKQEPKTPVAPKKDLKI. K1233 participates in a covalent cross-link: Glycyl lysine isopeptide (Lys-Gly) (interchain with G-Cter in SUMO2). Residues S1237 and S1240 each carry the phosphoserine modification. The segment covering 1247–1258 has biased composition (low complexity); that stretch reads TTPSSTAKSSSD. A compositionally biased stretch (basic and acidic residues) spans 1259–1320; sequence SFEHFRRAAR…AHEEARRRQE (62 aa). Positions 1321–1357 are enriched in low complexity; it reads QQQQQQQQRQEQQQQQQQAAAVAAASAPQAQSSQPQS. The span at 1361 to 1377 shows a compositional bias: basic and acidic residues; that stretch reads QQRELARKREQERRRRE.

This sequence belongs to the BET family. As to quaternary structure, binds acetylated histone H4. Interacts with p53/TP53; the interaction is direct. Interacts (via CTD region) with CDK9 and CCNT1, acting as an associated component of P-TEFb complex. Interacts with RELA (when acetylated at 'Lys-310'). Interacts (via NET domain) with NSD3, CHD4, BICRA and ATAD5. The interaction with BICRA bridges BRD4 to the GBAF complex. Interacts (via NET domain) with JMJD6 (via JmjC and N-terminal domains); the interaction is stronger in presence of ssRNA and recruits JMJD6 on distal enhancers. Interacts with NSD3. Interacts with NIPBL. In terms of processing, phosphorylation by CK2 disrupt the intramolecular binding between the bromo domain 2 and the NPS region and promotes binding between the NPS and the BID regions, leading to activate the protein and promote binding to acetylated histones. In absence of phosphorylation, BRD4 does not localize to p53/TP53 target gene promoters, phosphorylation promoting recruitment to p53/TP53 target promoters.

The protein localises to the nucleus. It localises to the chromosome. In terms of biological role, chromatin reader protein that recognizes and binds acetylated histones and plays a key role in transmission of epigenetic memory across cell divisions and transcription regulation. Remains associated with acetylated chromatin throughout the entire cell cycle and provides epigenetic memory for postmitotic G1 gene transcription by preserving acetylated chromatin status and maintaining high-order chromatin structure. During interphase, plays a key role in regulating the transcription of signal-inducible genes by associating with the P-TEFb complex and recruiting it to promoters. Also recruits P-TEFb complex to distal enhancers, so called anti-pause enhancers in collaboration with JMJD6. BRD4 and JMJD6 are required to form the transcriptionally active P-TEFb complex by displacing negative regulators such as HEXIM1 and 7SKsnRNA complex from P-TEFb, thereby transforming it into an active form that can then phosphorylate the C-terminal domain (CTD) of RNA polymerase II. Regulates differentiation of naive CD4(+) T-cells into T-helper Th17 by promoting recruitment of P-TEFb to promoters. Promotes phosphorylation of 'Ser-2' of the C-terminal domain (CTD) of RNA polymerase II. According to a report, directly acts as an atypical protein kinase and mediates phosphorylation of 'Ser-2' of the C-terminal domain (CTD) of RNA polymerase II; these data however need additional evidences in vivo. In addition to acetylated histones, also recognizes and binds acetylated RELA, leading to further recruitment of the P-TEFb complex and subsequent activation of NF-kappa-B. Also acts as a regulator of p53/TP53-mediated transcription: following phosphorylation by CK2, recruited to p53/TP53 specific target promoters. The protein is Bromodomain-containing protein 4 (Brd4) of Mus musculus (Mouse).